The following is a 361-amino-acid chain: MAGNTIGQLFRVTTFGESHGLALGCIVDGVPPGIPLTEADLQHDLDRRRPGTSRYTTQRREPDQVKILSGVFEGVTTGTSIGLLIENTDQRSQDYSAIKDVFRPGHADYTYEQKYGLRDYRGGGRSSARETAMRVAAGAIAKKYLAEKFGIEIRGCLTQMGDIPLEIKDWSLVEQNPFFCPDPDKIDALDELMRALKKEGDSIGAKVTVVASGVPAGLGEPVFDRLDADIAHALMSINAVKGVEIGDGFDVVALRGSQNRDEITKDGFQSNHAGGIFGGISSGQQIIAHMALKPTSSITVPGRTINRFGEEVEMITKGRHDPCVGIRAVPIAEAMLAIVLMDHLLRQRAQNADVKTDIPRW.

Arg48 and Arg54 together coordinate NADP(+). Residues 125–127, 238–239, Gly278, 293–297, and Arg319 each bind FMN; these read RSS, NA, and KPTSS.

Belongs to the chorismate synthase family. As to quaternary structure, homotetramer. The cofactor is FMNH2.

The catalysed reaction is 5-O-(1-carboxyvinyl)-3-phosphoshikimate = chorismate + phosphate. It participates in metabolic intermediate biosynthesis; chorismate biosynthesis; chorismate from D-erythrose 4-phosphate and phosphoenolpyruvate: step 7/7. In terms of biological role, catalyzes the anti-1,4-elimination of the C-3 phosphate and the C-6 proR hydrogen from 5-enolpyruvylshikimate-3-phosphate (EPSP) to yield chorismate, which is the branch point compound that serves as the starting substrate for the three terminal pathways of aromatic amino acid biosynthesis. This reaction introduces a second double bond into the aromatic ring system. This chain is Chorismate synthase, found in Shigella flexneri.